We begin with the raw amino-acid sequence, 186 residues long: Hydra actinoporin-like toxin 1 (186 aa).

A signal peptide spans 1-18; sequence MLLYICLVNLLLPLSVGA. An N-terminal region region spans residues 29 to 48; sequence KVGVDAALQQIDDVWKGKTV. The Cell attachment site, crucial for protein stability motif lies at 158–160; the sequence is RAG.

Belongs to the actinoporin family. HALT subfamily. As to quaternary structure, octamer or nonamer in membranes. Monomer in the soluble state. In vitro, interacts with folate receptor alpha (of target organism). Expressed female germline during oogenesis.

Its subcellular location is the nematocyst. It localises to the secreted. It is found in the target cell membrane. Its function is as follows. Pore-forming protein that forms hydrophilic pores and causes cytolysis. Compared to equinatoxin-2 (AC P61914), it reveals lower cytolysis activity (5-12-fold difference, tested on erythrocytes), a larger pore size (probably 2-3 nm) and different affinity to membrane lipids (100-fold lower affinity to sphingomyelin). Binds to sulfatides (SFT) as well as to the two sphingolipids, lysophosphatidic acid (LPA) and sphingosine-1-phosphate (S1P). It seems to bind more strongly to LPA than to S1P and SFT. Shows cytolytic activity on HeLa cells, with a different potency than its paralogs (from most potent to less potent: HALT-4&gt;HALT-6~HALT-1&gt;HALT-3&gt;HALT-7&gt;HALT-2). Pore formation is a multi-step process that involves specific recognition of membrane lipid by a protein aromatic residues rich region, firm binding to the membrane (mainly driven by hydrophobic interactions) accompanied by the transfer of the N-terminal region to the lipid-water interface and finally pore formation after oligomerization of monomers. In vitro, binds to the folate receptor alpha (FOLR1), a GPI-anchored membrane protein that plays a major role in the uptake of folate/folic acid into cells via endocytosis, suggesting a possible involvement of this receptor in the mechanism of HALT-1-induced cell lysis. In vivo, does not cause visible paralysis in larvae of the blowfly Sarcophaga faculata, the most common arthropod prey of Hydra. This Hydra vulgaris (Hydra) protein is Hydra actinoporin-like toxin 1.